Consider the following 576-residue polypeptide: Arginine--tRNA ligase (576 aa).

A 'HIGH' region motif is present at residues 122–132 (PNVAKQMHVGH).

Belongs to the class-I aminoacyl-tRNA synthetase family. As to quaternary structure, monomer.

The protein resides in the cytoplasm. The catalysed reaction is tRNA(Arg) + L-arginine + ATP = L-arginyl-tRNA(Arg) + AMP + diphosphate. The sequence is that of Arginine--tRNA ligase from Yersinia pseudotuberculosis serotype O:1b (strain IP 31758).